We begin with the raw amino-acid sequence, 128 residues long: Large ribosomal subunit protein bL12 (128 aa).

The protein belongs to the bacterial ribosomal protein bL12 family. Homodimer. Part of the ribosomal stalk of the 50S ribosomal subunit. Forms a multimeric L10(L12)X complex, where L10 forms an elongated spine to which 2 to 4 L12 dimers bind in a sequential fashion. Binds GTP-bound translation factors.

Functionally, forms part of the ribosomal stalk which helps the ribosome interact with GTP-bound translation factors. Is thus essential for accurate translation. The polypeptide is Large ribosomal subunit protein bL12 (Synechocystis sp. (strain ATCC 27184 / PCC 6803 / Kazusa)).